A 172-amino-acid polypeptide reads, in one-letter code: Cyclin-L1 (172 aa).

The interval 1-36 (MASGPHSTATAAAAASSAAPSAGGSSSGTTTTTTTT) is disordered. Residues 88 to 168 (ELIQAAGILL…LRGKSDQLHL (81 aa)) are cyclin-like.

The protein belongs to the cyclin family. Cyclin L subfamily. Interacts with POLR2A via its hyperphosphorylated C-terminal domain (CTD). Interacts with CDK11A, CDK11B, CDK12 and CDK13. May form a ternary complex with CDK11B and casein kinase II (CKII). Interacts with pre-mRNA-splicing factors, including at least SRSF1, SRSF2 and SRSF7/SLU7.

The protein localises to the nucleus speckle. Its subcellular location is the nucleus. It is found in the nucleoplasm. Functionally, involved in pre-mRNA splicing. Functions in association with cyclin-dependent kinases (CDKs). May play a role in the regulation of RNA polymerase II (pol II). Inhibited by the CDK-specific inhibitor CDKN1A/p21. In Pongo abelii (Sumatran orangutan), this protein is Cyclin-L1 (CCNL1).